Here is a 104-residue protein sequence, read N- to C-terminus: Large ribosomal subunit protein uL24 (104 aa).

It belongs to the universal ribosomal protein uL24 family. Part of the 50S ribosomal subunit.

Its function is as follows. One of two assembly initiator proteins, it binds directly to the 5'-end of the 23S rRNA, where it nucleates assembly of the 50S subunit. Functionally, one of the proteins that surrounds the polypeptide exit tunnel on the outside of the subunit. The chain is Large ribosomal subunit protein uL24 from Pseudoalteromonas translucida (strain TAC 125).